Here is a 324-residue protein sequence, read N- to C-terminus: Polycomb complex protein BMI-1 (324 aa).

The RING-type zinc-finger motif lies at 18 to 57 (CVLCGGYFIDATTIIECLHSFCKTCIVRYLETSKYCPICD). The Nuclear localization signal motif lies at 81–95 (KLVPGLFKNEMKRRR). Residues 160–180 (RYLRCPAAMTVMHLRKFLRSK) form an interaction with PHC2 region. Positions 162-226 (LRCPAAMTVM…GPLPLKYRVR (65 aa)) are interaction with E4F1. Residues 232–324 (MKMSHQRDGL…LNGSSATSSG (93 aa)) form a disordered region. Residues 264 to 276 (PSTSSCLPSPSTP) show a composition bias toward low complexity. Over residues 277–307 (VQSPHPQFPHISSTMNGTSNSPSANHQSSFA) the composition is skewed to polar residues. Residues 313–324 (SSLNGSSATSSG) show a composition bias toward low complexity.

As to quaternary structure, component of a PRC1-like complex. Identified in a PRC1-like HPRC-H complex with CBX2, CBX4, CBX8, PHC1, PHC2, PHC3, RING1 and RNF2. Interacts with RNF2/RING2. Interacts with RING1. Part of a complex that contains RNF2, UB2D3 and BMI1, where RNF2 and BMI1 form a tight heterodimer, and UB2D3 interacts only with RNF2. The complex composed of RNF2, UB2D3 and BMI1 binds nucleosomes, and has activity only with nucleosomal histone H2A. Interacts with CBX7 and CBX8. Interacts with SPOP. Part of a complex consisting of BMI1, CUL3 and SPOP. Interacts with E4F1. Interacts with PHC2. Interacts with zinc finger protein ZNF277. May be part of a complex including at least ZNF277, BMI1 and RNF2/RING2. Post-translationally, may be polyubiquitinated; which does not lead to proteasomal degradation. Monoubiquitinated. Detected in most organs with high expression levels in thymus, heart, brain and testis.

Its subcellular location is the nucleus. The protein resides in the cytoplasm. Its function is as follows. Component of a Polycomb group (PcG) multiprotein PRC1-like complex, a complex class required to maintain the transcriptionally repressive state of many genes, including Hox genes, throughout development. PcG PRC1 complex acts via chromatin remodeling and modification of histones; it mediates monoubiquitination of histone H2A 'Lys-119', rendering chromatin heritably changed in its expressibility. The complex composed of RNF2, UB2D3 and BMI1 binds nucleosomes, and has activity only with nucleosomal histone H2A. In the PRC1-like complex, regulates the E3 ubiquitin-protein ligase activity of RNF2/RING2. The polypeptide is Polycomb complex protein BMI-1 (Bmi1) (Mus musculus (Mouse)).